Consider the following 1143-residue polypeptide: AP-3 complex subunit delta (1143 aa).

8 HEAT repeats span residues 129-166 (DLAR…RYPE), 167-203 (SLRP…RNPK), 205-242 (YLPL…HEPR), 245-279 (KKLI…SDHI), 280-317 (PLMK…IHPK), 318-354 (AVSE…KKNI), 356-389 (DIVF…MGTY), and 416-455 (LIAS…PTEG). Disordered regions lie at residues 520-541 (KIPS…DQNE), 634-692 (QEPI…RHPI), 704-728 (KQAN…PENI), 741-792 (HVGA…NDAL), and 829-899 (KKNA…QAAA). Residues 524 to 540 (LDDDDEEEEAQEEEDQN) show a composition bias toward acidic residues. Residues 526-550 (DDDEEEEAQEEEDQNEITHEIVQEC) are a coiled coil. Positions 653-662 (HQKKHHKHHR) are enriched in basic residues. Acidic residues predominate over residues 666–675 (DGDDDEDDET). A coiled-coil region spans residues 814–835 (TDIIKEKEREMAMLAKKNAKLS). Residues 840 to 849 (PSTANYSEVT) are compositionally biased toward polar residues. 2 stretches are compositionally biased toward low complexity: residues 854 to 867 (APAK…AAGS) and 881 to 899 (KPAA…QAAA). One can recognise a GAE domain in the interval 914–1016 (KTILDDDNFK…FTLLASPSSS (103 aa)).

It belongs to the adaptor complexes large subunit family. Adaptor protein complex 3 (AP-3) is a heterotetramer composed of two large adaptins (delta-type subunit and beta-type subunit), a medium adaptin (mu-type subunit) and a small adaptin (sigma-type subunit).

Its subcellular location is the endosome membrane. Part of the AP-3 complex, an adaptor-related complex which is essential for the compartmentalization of the endocytic pathway. The chain is AP-3 complex subunit delta (ap3d1) from Dictyostelium discoideum (Social amoeba).